We begin with the raw amino-acid sequence, 124 residues long: Con-Ins Tx1 (124 aa).

The signal sequence occupies residues 1-24 (MTTSSYFLLVALGLLLYVFQSSFG). 4 disulfide bridges follow: cysteine 29-cysteine 107, cysteine 41-cysteine 110, cysteine 53-cysteine 123, and cysteine 109-cysteine 114. Proline 34 bears the 4-hydroxyproline; partial mark. Positions 59–92 (EQGGANNARANTGRTSSLMKRRGFLSLLKKRGKR) are cleaved as a propeptide — c peptide. The residue at position 118 (glutamate 118) is a 4-carboxyglutamate; partial.

The protein belongs to the insulin family. In terms of assembly, heterodimer of A and B chains; disulfide-linked. As to expression, expressed by the venom gland.

The protein localises to the secreted. In terms of biological role, this venom insulin facilitates prey capture by rapidly inducing hypoglycemic shock. Intraperitoneal injection of this peptide into zebrafish lowers blood glucose with the same potency than human insulin. In vivo, when applied to water, this peptide reduces overall locomotor activity of zebrafish larvae, observed as a significant decrease in the percentage of time spent swimming and movement frequency. The polypeptide is Con-Ins Tx1 (Conus textile (Cloth-of-gold cone)).